We begin with the raw amino-acid sequence, 507 residues long: Phosphoprotein (507 aa).

The segment at 1-48 (MAEEQARHVKNGLECIRALKAEPIGSLAIGEAMAAWSEISDNPGQERA) is interaction with N0. Disordered regions lie at residues 42–91 (NPGQ…DDTE), 133–163 (SGLD…TEGY), 201–227 (NNFP…SETP), 252–273 (TQCA…GNVP), and 285–307 (WTPE…GDHY). Residues Ser-86 and Ser-151 each carry the phosphoserine modification. Positions 144-160 (GDNESENSDVDIGEPDT) are enriched in acidic residues. Positions 260-270 (SEPSGPGAPAG) are enriched in low complexity. Residues 286–301 (TPESGTTISPRSQNNK) are compositionally biased toward polar residues. The segment at 304 to 376 (GDHYDDELFS…LSSIMIAIPG (73 aa)) is multimerization. Interaction with the L polymerase regions lie at residues 361-377 (STLE…IPGL) and 396-410 (PIIG…AEVL). Residues 457–507 (GPVSRSVIRSIIKSSRIEEDRKRYLMTLLDDIKGANDLSKFHQMLMKIIMK) form a x domain (XD) region. The tract at residues 459-507 (VSRSVIRSIIKSSRIEEDRKRYLMTLLDDIKGANDLSKFHQMLMKIIMK) is interaction with the nucleocapsid (N-RNA).

It belongs to the morbillivirus P protein family. In terms of assembly, homotetramer. Interacts (via multimerization domain and XD domain) with polymerase L; this interaction forms the polymerase L-P complex. Interacts (via N-terminus) with N0 (via Ncore); this interaction allows P to chaperon N0 to avoid N polymerization and non-specific RNA binding before encapsidation. Interacts (via C-terminus) with N-RNA template (via Ntail); this interaction maintains the P/L complex anchored to the nucleocapsid template during the sequential transcription. Interacts (via C-terminus) with protein C this interaction allows C to associate with the ribonucleocapsid. In terms of processing, phosphorylation on serines by host CK2 is necessary for the formation of viral factories.

Essential cofactor of the RNA polymerase L that plays a central role in the transcription and replication by forming the polymerase complex with RNA polymerase L and recruiting L to the genomic N-RNA template for RNA synthesis. Also plays a central role in the encapsidation of nascent RNA chains by forming the encapsidation complex with the nucleocapsid protein N (N-P complex). Acts as a chaperone for newly synthesized free N protein, so-called N0, allowing encapsidation of nascent RNA chains during replication. The nucleoprotein protein N prevents excessive phosphorylation of P, which leads to down-regulation of viral transcription/ replication. Participates, together with N, in the formation of viral factories (viroplasms), which are large inclusions in the host cytoplasm where replication takes place. This Homo sapiens (Human) protein is Phosphoprotein (P/V).